A 374-amino-acid polypeptide reads, in one-letter code: Polar flagellin E (374 aa).

The stretch at 102–126 forms a coiled coil; sequence SHEQDDRKSLQQEVIALQDELDRVA.

It belongs to the bacterial flagellin family. In terms of assembly, heteromer of multiple flagellin subunits including FlaA, FlaB/D, FlaC, FlaE and FlaF.

The protein localises to the secreted. It is found in the bacterial flagellum. Functionally, flagellin is the subunit protein which polymerizes to form the filaments of bacterial flagella. This is Polar flagellin E (flaE) from Vibrio parahaemolyticus serotype O3:K6 (strain RIMD 2210633).